Here is a 483-residue protein sequence, read N- to C-terminus: Membrane-bound lytic murein transglycosylase F (483 aa).

The N-terminal stretch at 1–18 (MKGLIARFIAGFALLLWA) is a signal peptide. The interval 19–267 (WDMVFPWQQL…RIEEKYFNHL (249 aa)) is non-LT domain. The tract at residues 269 to 483 (HFDYVDIQSY…SKESDSTLKE (215 aa)) is LT domain. Residue Glu312 is part of the active site. The interval 459 to 483 (QIQNNEEQSSVPQEISKESDSTLKE) is disordered. A compositionally biased stretch (basic and acidic residues) spans 473 to 483 (ISKESDSTLKE).

This sequence in the N-terminal section; belongs to the bacterial solute-binding protein 3 family. It in the C-terminal section; belongs to the transglycosylase Slt family.

The protein resides in the cell outer membrane. It carries out the reaction Exolytic cleavage of the (1-&gt;4)-beta-glycosidic linkage between N-acetylmuramic acid (MurNAc) and N-acetylglucosamine (GlcNAc) residues in peptidoglycan, from either the reducing or the non-reducing ends of the peptidoglycan chains, with concomitant formation of a 1,6-anhydrobond in the MurNAc residue.. In terms of biological role, murein-degrading enzyme that degrades murein glycan strands and insoluble, high-molecular weight murein sacculi, with the concomitant formation of a 1,6-anhydromuramoyl product. Lytic transglycosylases (LTs) play an integral role in the metabolism of the peptidoglycan (PG) sacculus. Their lytic action creates space within the PG sacculus to allow for its expansion as well as for the insertion of various structures such as secretion systems and flagella. The polypeptide is Membrane-bound lytic murein transglycosylase F (Actinobacillus pleuropneumoniae serotype 7 (strain AP76)).